The primary structure comprises 1159 residues: ATP-dependent helicase/deoxyribonuclease subunit B (1159 aa).

The protein belongs to the helicase family. AddB/RexB type 2 subfamily. As to quaternary structure, heterodimer of AddA and RexB. Mg(2+) is required as a cofactor.

The heterodimer acts as both an ATP-dependent DNA helicase and an ATP-dependent, dual-direction single-stranded exonuclease. Recognizes the chi site generating a DNA molecule suitable for the initiation of homologous recombination. This subunit has 5' -&gt; 3' nuclease activity but not helicase activity. The polypeptide is ATP-dependent helicase/deoxyribonuclease subunit B (Leuconostoc mesenteroides subsp. mesenteroides (strain ATCC 8293 / DSM 20343 / BCRC 11652 / CCM 1803 / JCM 6124 / NCDO 523 / NBRC 100496 / NCIMB 8023 / NCTC 12954 / NRRL B-1118 / 37Y)).